The sequence spans 600 residues: Cationic amino acid transporter 4, vacuolar (600 aa).

The Cytoplasmic portion of the chain corresponds to 1–32 (MNSLVRRKQVDSVHLIKNDGPHQLAKKLSAVD). Residues 33–53 (LVAIGVGTTIGAGVYILVGTV) traverse the membrane as a helical segment. Residues 54-60 (AREHTGP) are Vacuolar-facing. The helical transmembrane segment at 61–81 (ALAVSFFIAGVAAALSACCYA) threads the bilayer. The Cytoplasmic segment spans residues 82–92 (ELASRCPSAGS). A helical transmembrane segment spans residues 93-115 (AYHYAYICLGEGIAWLVGWALVL). The Vacuolar portion of the chain corresponds to 116–152 (DYTIGGSAIARGITPNLASFFGGLDNLPVFLARQTIP). A helical transmembrane segment spans residues 153 to 173 (GVGIVVDPCAALLIMIVTILL). Residues 174-184 (CFGIKESSTVQ) lie on the Cytoplasmic side of the membrane. The chain crosses the membrane as a helical span at residues 185 to 205 (AIVTSVNVCTLVFIIVVGGYL). The Vacuolar segment spans residues 206–220 (ACKTGWVGYDLPSGY). The helical transmembrane segment at 221–241 (FPFGLNGILAGSAVVFFSYIG) threads the bilayer. Topologically, residues 242–264 (FDTVTSTAEEVKNPQRDLPLGIG) are cytoplasmic. The helical transmembrane segment at 265 to 285 (IALLICCILYMLLSVVIVGLV) threads the bilayer. The Vacuolar segment spans residues 286-308 (PYYSLNPDTPISSAFGDSGMQWA). The chain crosses the membrane as a helical span at residues 309–329 (AYILTTGAITALCASLLGSLL). The Cytoplasmic segment spans residues 330-360 (AQPRIFMAMARDGLLPAFFSEISPRTQVPVK). The chain crosses the membrane as a helical span at residues 361-381 (STIAIGVLAAALAFFMDVAQL). A topological domain (vacuolar) is located at residue Ser382. The chain crosses the membrane as a helical span at residues 383 to 403 (EMVSVGTLMAFTAVAVCVLVL). At 404–462 (RYVPPDGVPLSSSSQTLSDTDESRAETENFLVDAIESSDSPLLGNETARDEKYFGKRRK) the chain is on the cytoplasmic side. A helical transmembrane segment spans residues 463–483 (IAAWSIALVCIGVLGLASAAS). Residues 484 to 492 (AERLPSFPR) are Vacuolar-facing. Residues 493–513 (FTICGVSAVILLGSLITLGYI) form a helical membrane-spanning segment. Residues 514–528 (DEDEERHNFGHKGGF) lie on the Cytoplasmic side of the membrane. Residues 529-549 (LCPFVPYLPVLCILINTYLII) form a helical membrane-spanning segment. Residue Asn550 is a topological domain, vacuolar. A helical transmembrane segment spans residues 551–571 (IGAGTWIRVLIWLLIGSMIYI). Residues 572-600 (FYGRSHSLLNNAVYVPTMTCTRKTTDHLA) are Cytoplasmic-facing.

It belongs to the amino acid-polyamine-organocation (APC) superfamily. Cationic amino acid transporter (CAT) (TC 2.A.3.3) family. As to expression, expressed in roots, stems, flowers, and leaves.

The protein localises to the vacuole membrane. Permease involved in the transport of the cationic amino acids. This chain is Cationic amino acid transporter 4, vacuolar (CAT4), found in Arabidopsis thaliana (Mouse-ear cress).